The sequence spans 121 residues: Probable V-type proton ATPase subunit F (121 aa).

Belongs to the V-ATPase F subunit family. As to quaternary structure, V-ATPase is a heteromultimeric enzyme made up of two complexes: the ATP-hydrolytic V1 complex and the proton translocation V0 complex. The V1 complex consists of three catalytic AB heterodimers that form a heterohexamer, three peripheral stalks each consisting of EG heterodimers, one central rotor including subunits D and F, and the regulatory subunits C and H. The proton translocation complex V0 consists of the proton transport subunit a, a ring of proteolipid subunits c9c'', rotary subunit d, subunits e and f, and the accessory subunits vah-19/Ac45 and vah-20/PRR.

Subunit of the V1 complex of vacuolar(H+)-ATPase (V-ATPase), a multisubunit enzyme composed of a peripheral complex (V1) that hydrolyzes ATP and a membrane integral complex (V0) that translocates protons. V-ATPase is responsible for acidifying and maintaining the pH of intracellular compartments and in some cell types, is targeted to the plasma membrane, where it is responsible for acidifying the extracellular environment. Required along with other vacuolar ATPase components for the removal of protein aggregates which form in immature oocytes in the distal gonad. This removal occurs as the oocytes mature and move to the proximal gonad, is triggered by the introduction of sperm through mating and occurs before fertilization. The introduction of sperm triggers V-ATPase accumulation in proximal oocytes and induces lysosomal acidification which leads to engulfing of protein aggregates by lysosomes and subsequent clearance of the aggregates. Lysosomal acidification also leads to changes in mitochondrial morphology and function. Mitochondria in distal immature oocytes are fragmented, produce high levels of reactive oxygen species (ROS) and have high membrane potential, indicative of metabolic inactivity. In contrast, mitochondria in proximal mature oocytes are tubular with lower ROS levels and membrane potential, indicative of an active metabolic state required for aggregate mobilization before clearance. This Caenorhabditis elegans protein is Probable V-type proton ATPase subunit F.